The sequence spans 480 residues: ATP synthase subunit beta (480 aa).

158–165 (GGAGVGKT) lines the ATP pocket.

Belongs to the ATPase alpha/beta chains family. F-type ATPases have 2 components, CF(1) - the catalytic core - and CF(0) - the membrane proton channel. CF(1) has five subunits: alpha(3), beta(3), gamma(1), delta(1), epsilon(1). CF(0) has three main subunits: a(1), b(2) and c(9-12). The alpha and beta chains form an alternating ring which encloses part of the gamma chain. CF(1) is attached to CF(0) by a central stalk formed by the gamma and epsilon chains, while a peripheral stalk is formed by the delta and b chains.

It is found in the cell inner membrane. It carries out the reaction ATP + H2O + 4 H(+)(in) = ADP + phosphate + 5 H(+)(out). Its function is as follows. Produces ATP from ADP in the presence of a proton gradient across the membrane. The catalytic sites are hosted primarily by the beta subunits. The protein is ATP synthase subunit beta of Koribacter versatilis (strain Ellin345).